Consider the following 230-residue polypeptide: Orotidine 5'-phosphate decarboxylase (230 aa).

Substrate is bound by residues Asp-11, Lys-34, 61–70 (DLKLHDIPNT), Thr-117, Arg-179, Gln-188, Gly-208, and Arg-209. Catalysis depends on Lys-63, which acts as the Proton donor.

The protein belongs to the OMP decarboxylase family. Type 1 subfamily. Homodimer.

It carries out the reaction orotidine 5'-phosphate + H(+) = UMP + CO2. It functions in the pathway pyrimidine metabolism; UMP biosynthesis via de novo pathway; UMP from orotate: step 2/2. Its function is as follows. Catalyzes the decarboxylation of orotidine 5'-monophosphate (OMP) to uridine 5'-monophosphate (UMP). The sequence is that of Orotidine 5'-phosphate decarboxylase from Streptococcus uberis (strain ATCC BAA-854 / 0140J).